The sequence spans 607 residues: Synaptotagmin-like protein 3 (607 aa).

The region spanning 4-123 (EVDLESFKEL…IKTGEWFFEE (120 aa)) is the RabBD domain. The tract at residues 221–279 (VGHTERRSQSDTAVNVTSRKASTPDILKAFHQEDPKHPPDPVLKQDTPPSSPTHSAVFS) is disordered. Over residues 230 to 241 (SDTAVNVTSRKA) the composition is skewed to polar residues. The span at 248-259 (KAFHQEDPKHPP) shows a compositional bias: basic and acidic residues. C2 domains are found at residues 305 to 430 (VTGE…ARWY) and 458 to 590 (LPAG…LQWH).

In terms of assembly, monomer. Binds NRXN1. Binds RAB27A that has been activated by GTP-binding via its N-terminus. Highly expressed in spleen and lung. Detected at lower levels in heart and testis.

Its subcellular location is the endomembrane system. Its function is as follows. May act as Rab effector protein and play a role in vesicle trafficking. Binds phospholipids in the presence of calcium ions. The protein is Synaptotagmin-like protein 3 (Sytl3) of Mus musculus (Mouse).